A 188-amino-acid chain; its full sequence is Adenine phosphoribosyltransferase (188 aa).

It belongs to the purine/pyrimidine phosphoribosyltransferase family. Homodimer.

Its subcellular location is the cytoplasm. It carries out the reaction AMP + diphosphate = 5-phospho-alpha-D-ribose 1-diphosphate + adenine. Its pathway is purine metabolism; AMP biosynthesis via salvage pathway; AMP from adenine: step 1/1. Its function is as follows. Catalyzes a salvage reaction resulting in the formation of AMP, that is energically less costly than de novo synthesis. The chain is Adenine phosphoribosyltransferase from Burkholderia orbicola (strain MC0-3).